We begin with the raw amino-acid sequence, 378 residues long: Chaperone protein DnaJ (378 aa).

A J domain is found at 5 to 70 (DYYEVLSVSR…DKKAAYDQFG (66 aa)). A CR-type zinc finger spans residues 133-211 (GLTKELRIPT…CHGEGRVEKS (79 aa)). Zn(2+)-binding residues include Cys146, Cys149, Cys163, Cys166, Cys185, Cys188, Cys199, and Cys202. CXXCXGXG motif repeat units lie at residues 146–153 (CDSCDGSG), 163–170 (CGTCHGQG), 185–192 (CPTCHGRG), and 199–206 (CNKCHGEG).

It belongs to the DnaJ family. In terms of assembly, homodimer. Zn(2+) serves as cofactor.

It localises to the cytoplasm. In terms of biological role, participates actively in the response to hyperosmotic and heat shock by preventing the aggregation of stress-denatured proteins and by disaggregating proteins, also in an autonomous, DnaK-independent fashion. Unfolded proteins bind initially to DnaJ; upon interaction with the DnaJ-bound protein, DnaK hydrolyzes its bound ATP, resulting in the formation of a stable complex. GrpE releases ADP from DnaK; ATP binding to DnaK triggers the release of the substrate protein, thus completing the reaction cycle. Several rounds of ATP-dependent interactions between DnaJ, DnaK and GrpE are required for fully efficient folding. Also involved, together with DnaK and GrpE, in the DNA replication of plasmids through activation of initiation proteins. The sequence is that of Chaperone protein DnaJ from Shewanella sediminis (strain HAW-EB3).